The following is a 147-amino-acid chain: UPF0216 protein MK1676 (147 aa).

It belongs to the UPF0216 family.

The chain is UPF0216 protein MK1676 from Methanopyrus kandleri (strain AV19 / DSM 6324 / JCM 9639 / NBRC 100938).